The sequence spans 162 residues: uncharacterized protein (162 aa).

Residues 7–27 form a helical membrane-spanning segment; the sequence is LGGVMLFAIVSLMVCGCMVVF.

The protein localises to the membrane. This is an uncharacterized protein from Methanocaldococcus jannaschii (strain ATCC 43067 / DSM 2661 / JAL-1 / JCM 10045 / NBRC 100440) (Methanococcus jannaschii).